The chain runs to 227 residues: Phosphatidylserine decarboxylase proenzyme (227 aa).

Ser169 serves as the catalytic Schiff-base intermediate with substrate; via pyruvic acid. Ser169 is modified (pyruvic acid (Ser); by autocatalysis). The disordered stretch occupies residues Gly197–Ser227. Positions Arg206 to Ser227 are enriched in low complexity.

This sequence belongs to the phosphatidylserine decarboxylase family. PSD-A subfamily. In terms of assembly, heterodimer of a large membrane-associated beta subunit and a small pyruvoyl-containing alpha subunit. Pyruvate serves as cofactor. Is synthesized initially as an inactive proenzyme. Formation of the active enzyme involves a self-maturation process in which the active site pyruvoyl group is generated from an internal serine residue via an autocatalytic post-translational modification. Two non-identical subunits are generated from the proenzyme in this reaction, and the pyruvate is formed at the N-terminus of the alpha chain, which is derived from the carboxyl end of the proenzyme. The post-translation cleavage follows an unusual pathway, termed non-hydrolytic serinolysis, in which the side chain hydroxyl group of the serine supplies its oxygen atom to form the C-terminus of the beta chain, while the remainder of the serine residue undergoes an oxidative deamination to produce ammonia and the pyruvoyl prosthetic group on the alpha chain.

The protein resides in the cell membrane. It catalyses the reaction a 1,2-diacyl-sn-glycero-3-phospho-L-serine + H(+) = a 1,2-diacyl-sn-glycero-3-phosphoethanolamine + CO2. Its pathway is phospholipid metabolism; phosphatidylethanolamine biosynthesis; phosphatidylethanolamine from CDP-diacylglycerol: step 2/2. Catalyzes the formation of phosphatidylethanolamine (PtdEtn) from phosphatidylserine (PtdSer). In Salinibacter ruber (strain DSM 13855 / M31), this protein is Phosphatidylserine decarboxylase proenzyme.